The following is a 209-amino-acid chain: Uracil phosphoribosyltransferase (209 aa).

5-phospho-alpha-D-ribose 1-diphosphate contacts are provided by residues arginine 79, arginine 104, and 131-139 (DPMLATGGS). Residues isoleucine 194 and 199–201 (GDA) contribute to the uracil site. Residue aspartate 200 coordinates 5-phospho-alpha-D-ribose 1-diphosphate.

The protein belongs to the UPRTase family. Requires Mg(2+) as cofactor.

The catalysed reaction is UMP + diphosphate = 5-phospho-alpha-D-ribose 1-diphosphate + uracil. The protein operates within pyrimidine metabolism; UMP biosynthesis via salvage pathway; UMP from uracil: step 1/1. With respect to regulation, allosterically activated by GTP. In terms of biological role, catalyzes the conversion of uracil and 5-phospho-alpha-D-ribose 1-diphosphate (PRPP) to UMP and diphosphate. The protein is Uracil phosphoribosyltransferase of Alkaliphilus metalliredigens (strain QYMF).